The following is a 187-amino-acid chain: UPF0301 protein CKO_04323 (187 aa).

This sequence belongs to the UPF0301 (AlgH) family.

This Citrobacter koseri (strain ATCC BAA-895 / CDC 4225-83 / SGSC4696) protein is UPF0301 protein CKO_04323.